A 171-amino-acid chain; its full sequence is Large ribosomal subunit protein uL10 (171 aa).

This sequence belongs to the universal ribosomal protein uL10 family. Part of the ribosomal stalk of the 50S ribosomal subunit. The N-terminus interacts with L11 and the large rRNA to form the base of the stalk. The C-terminus forms an elongated spine to which L12 dimers bind in a sequential fashion forming a multimeric L10(L12)X complex.

In terms of biological role, forms part of the ribosomal stalk, playing a central role in the interaction of the ribosome with GTP-bound translation factors. This chain is Large ribosomal subunit protein uL10, found in Cereibacter sphaeroides (strain ATCC 17023 / DSM 158 / JCM 6121 / CCUG 31486 / LMG 2827 / NBRC 12203 / NCIMB 8253 / ATH 2.4.1.) (Rhodobacter sphaeroides).